The following is an 89-amino-acid chain: Large ribosomal subunit protein bL27 (89 aa).

Residues M1 to G22 form a disordered region.

Belongs to the bacterial ribosomal protein bL27 family.

The chain is Large ribosomal subunit protein bL27 from Gluconacetobacter diazotrophicus (strain ATCC 49037 / DSM 5601 / CCUG 37298 / CIP 103539 / LMG 7603 / PAl5).